The chain runs to 391 residues: Ferrochelatase (391 aa).

2 residues coordinate Fe cation: His196 and Glu281.

Belongs to the ferrochelatase family.

The protein localises to the cytoplasm. It catalyses the reaction heme b + 2 H(+) = protoporphyrin IX + Fe(2+). The protein operates within porphyrin-containing compound metabolism; protoheme biosynthesis; protoheme from protoporphyrin-IX: step 1/1. Catalyzes the ferrous insertion into protoporphyrin IX. In Synechococcus sp. (strain CC9311), this protein is Ferrochelatase.